The chain runs to 382 residues: MTRAGLSPLAWLDEVADQRRAAGLRRALRTRPAGGTAVDLASNDYLGLSTHPRVVEGAVRAVREWGAGSTGSRLVTGNTELHEGFERALAAFTGAESALVFSSGYTANLGAVVALSGPGSLLVSDALTHASLVDACRLSRARVVVTPHRDVTAIETALATRDEQRAIVVTDSVFSADGVLAPLRDMHDVCRRHGALLIVDEAHGLGVRGTGGRGLLDEVGLAGAPDVVMTTTLSKALGSQGGVVLGPLAVRDHLIDAARPFIFDTGLAPAAVGAAWAALEVLVDEPSRARAVLDNAAALAQACDVPARPDSAVVSVILGEPEVALAAAIACLEQGLRVGCFRPPTVPAGTSRLRLTARASLTDDDLDTARRVLADVLTAARR.

Arg26 contacts substrate. A pyridoxal 5'-phosphate-binding site is contributed by 104-105 (GY). A substrate-binding site is contributed by His129. Residues Ser175, 200–203 (DEAH), and 232–235 (TLSK) each bind pyridoxal 5'-phosphate. Lys235 is subject to N6-(pyridoxal phosphate)lysine. Thr345 is a binding site for substrate.

The protein belongs to the class-II pyridoxal-phosphate-dependent aminotransferase family. BioF subfamily. Homodimer. The cofactor is pyridoxal 5'-phosphate.

The enzyme catalyses 6-carboxyhexanoyl-[ACP] + L-alanine + H(+) = (8S)-8-amino-7-oxononanoate + holo-[ACP] + CO2. It participates in cofactor biosynthesis; biotin biosynthesis. Catalyzes the decarboxylative condensation of pimeloyl-[acyl-carrier protein] and L-alanine to produce 8-amino-7-oxononanoate (AON), [acyl-carrier protein], and carbon dioxide. The protein is 8-amino-7-oxononanoate synthase of Mycobacterium sp. (strain KMS).